The sequence spans 398 residues: Signal-regulatory protein beta-1 isoform 3 (398 aa).

An N-terminal signal peptide occupies residues M1–G29. The Extracellular segment spans residues E30–L371. Positions E31–G136 constitute an Ig-like V-type domain. 2 disulfides stabilise this stretch: C54/C120 and C169/C227. Ig-like C1-type domains lie at P147 to S246 and P253 to K347. N-linked (GlcNAc...) asparagine glycosylation is found at N244, N291, and N318. Residues C272 and C330 are joined by a disulfide bond. A compositionally biased stretch (basic and acidic residues) spans Q337 to E354. The disordered stretch occupies residues Q337–P361. A helical membrane pass occupies residues L372–V392. The Cytoplasmic segment spans residues Y393–A398.

The protein localises to the membrane. Its function is as follows. Immunoglobulin-like cell surface receptor involved in the negative regulation of receptor tyrosine kinase-coupled signaling processes. This Homo sapiens (Human) protein is Signal-regulatory protein beta-1 isoform 3 (SIRPB1).